The sequence spans 346 residues: Annexin A1 (346 aa).

A Phosphoserine; by TRPM7 modification is found at Ser-5. Residue Gln-19 forms an Isoglutamyl lysine isopeptide (Gln-Lys) (interchain with K-?) linkage. Tyr-21 carries the phosphotyrosine; by EGFR modification. 2 positions are modified to phosphoserine: Ser-34 and Ser-37. Annexin repeat units follow at residues 42–113, 114–185, 197–269, and 273–344; these read FNPS…ALLK, TPAR…SLAK, DLAD…AIVK, and SKPM…ALCG. Lys-58 carries the N6-acetyllysine modification. Residues Gly-59, Val-60, Glu-62, Lys-97, Leu-100, Glu-105, Met-127, Gly-129, Gly-131, Thr-132, and Glu-134 each contribute to the Ca(2+) site. The residue at position 136 (Thr-136) is a Phosphothreonine. Ca(2+) is bound by residues Asp-171, Gly-210, and Arg-213. Lys-214 is covalently cross-linked (Glycyl lysine isopeptide (Lys-Gly) (interchain with G-Cter in SUMO1); alternate). Residue Lys-214 forms a Glycyl lysine isopeptide (Lys-Gly) (interchain with G-Cter in SUMO2); alternate linkage. Ca(2+)-binding residues include Gly-215, Asp-253, Glu-255, and Met-256. Lys-257 participates in a covalent cross-link: Glycyl lysine isopeptide (Lys-Gly) (interchain with G-Cter in SUMO1). Residues Glu-261, Met-286, Gly-288, and Gly-290 each coordinate Ca(2+). An N6-acetyllysine modification is found at Lys-312. A disulfide bond links Cys-324 and Cys-343. Ca(2+) is bound by residues Leu-328, Glu-330, and Thr-331. Lys-332 is covalently cross-linked (Glycyl lysine isopeptide (Lys-Gly) (interchain with G-Cter in SUMO1)). Glu-336 is a Ca(2+) binding site.

This sequence belongs to the annexin family. As to quaternary structure, homodimer; non-covalently linked. Homodimer; linked by transglutamylation. Homodimers linked by transglutamylation are observed in placenta, but not in other tissues. Interacts with S100A11. Heterotetramer, formed by two molecules each of S100A11 and ANXA1. Interacts with DYSF. Interacts with EGFR. Phosphorylated by protein kinase C, EGFR and TRPM7. Phosphorylated in response to EGF treatment. In terms of processing, sumoylated. Post-translationally, proteolytically cleaved by cathepsin CTSG to release the active N-terminal peptide Ac2-26.

It localises to the nucleus. The protein resides in the cytoplasm. The protein localises to the cell projection. Its subcellular location is the cilium. It is found in the basolateral cell membrane. It localises to the lateral cell membrane. The protein resides in the cell membrane. The protein localises to the apical cell membrane. Its subcellular location is the membrane. It is found in the early endosome. It localises to the cytoplasmic vesicle membrane. The protein resides in the endosome membrane. The protein localises to the secreted. Its subcellular location is the extracellular space. It is found in the extracellular exosome. It localises to the cytoplasmic vesicle. The protein resides in the secretory vesicle lumen. The protein localises to the phagocytic cup. Functionally, plays important roles in the innate immune response as effector of glucocorticoid-mediated responses and regulator of the inflammatory process. Has anti-inflammatory activity. Plays a role in glucocorticoid-mediated down-regulation of the early phase of the inflammatory response. Contributes to the adaptive immune response by enhancing signaling cascades that are triggered by T-cell activation, regulates differentiation and proliferation of activated T-cells. Promotes the differentiation of T-cells into Th1 cells and negatively regulates differentiation into Th2 cells. Has no effect on unstimulated T-cells. Negatively regulates hormone exocytosis via activation of the formyl peptide receptors and reorganization of the actin cytoskeleton. Has high affinity for Ca(2+) and can bind up to eight Ca(2+) ions. Displays Ca(2+)-dependent binding to phospholipid membranes. Plays a role in the formation of phagocytic cups and phagosomes. Plays a role in phagocytosis by mediating the Ca(2+)-dependent interaction between phagosomes and the actin cytoskeleton. Its function is as follows. Functions at least in part by activating the formyl peptide receptors and downstream signaling cascades. Promotes chemotaxis of granulocytes and monocytes via activation of the formyl peptide receptors. Promotes rearrangement of the actin cytoskeleton, cell polarization and cell migration. Promotes resolution of inflammation and wound healing. Acts via neutrophil N-formyl peptide receptors to enhance the release of CXCL2. The sequence is that of Annexin A1 (ANXA1) from Equus caballus (Horse).